A 289-amino-acid chain; its full sequence is ATP synthase gamma chain (289 aa).

Belongs to the ATPase gamma chain family. F-type ATPases have 2 components, CF(1) - the catalytic core - and CF(0) - the membrane proton channel. CF(1) has five subunits: alpha(3), beta(3), gamma(1), delta(1), epsilon(1). CF(0) has three main subunits: a, b and c.

The protein localises to the cell inner membrane. Produces ATP from ADP in the presence of a proton gradient across the membrane. The gamma chain is believed to be important in regulating ATPase activity and the flow of protons through the CF(0) complex. The sequence is that of ATP synthase gamma chain from Leptospira biflexa serovar Patoc (strain Patoc 1 / ATCC 23582 / Paris).